The sequence spans 231 residues: 5'-methylthioadenosine/S-adenosylhomocysteine nucleosidase (231 aa).

Residue Glu-13 is the Proton acceptor of the active site. Substrate contacts are provided by residues Gly-79, Met-154, and 175-176; that span reads ME. Asp-199 serves as the catalytic Proton donor.

It belongs to the PNP/UDP phosphorylase family. MtnN subfamily.

The catalysed reaction is S-adenosyl-L-homocysteine + H2O = S-(5-deoxy-D-ribos-5-yl)-L-homocysteine + adenine. It carries out the reaction S-methyl-5'-thioadenosine + H2O = 5-(methylsulfanyl)-D-ribose + adenine. It catalyses the reaction 5'-deoxyadenosine + H2O = 5-deoxy-D-ribose + adenine. It functions in the pathway amino-acid biosynthesis; L-methionine biosynthesis via salvage pathway; S-methyl-5-thio-alpha-D-ribose 1-phosphate from S-methyl-5'-thioadenosine (hydrolase route): step 1/2. Its function is as follows. Catalyzes the irreversible cleavage of the glycosidic bond in both 5'-methylthioadenosine (MTA) and S-adenosylhomocysteine (SAH/AdoHcy) to adenine and the corresponding thioribose, 5'-methylthioribose and S-ribosylhomocysteine, respectively. Also cleaves 5'-deoxyadenosine, a toxic by-product of radical S-adenosylmethionine (SAM) enzymes, into 5-deoxyribose and adenine. This Marinomonas sp. (strain MWYL1) protein is 5'-methylthioadenosine/S-adenosylhomocysteine nucleosidase.